We begin with the raw amino-acid sequence, 159 residues long: ATP synthase subunit delta, mitochondrial (159 aa).

A mitochondrion-targeting transit peptide spans 1–23 (MFRLSAARTLAKSVNTVVAKRTY).

The protein belongs to the ATPase epsilon chain family. F-type ATPases have 2 components, CF(1) - the catalytic core - and CF(0) - the membrane proton channel. CF(1) has five subunits: alpha(3), beta(3), gamma(1), delta(1), epsilon(1). CF(0) has three main subunits: a, b and c.

It localises to the mitochondrion. It is found in the mitochondrion inner membrane. Functionally, mitochondrial membrane ATP synthase (F(1)F(0) ATP synthase or Complex V) produces ATP from ADP in the presence of a proton gradient across the membrane which is generated by electron transport complexes of the respiratory chain. F-type ATPases consist of two structural domains, F(1) - containing the extramembraneous catalytic core, and F(0) - containing the membrane proton channel, linked together by a central stalk and a peripheral stalk. During catalysis, ATP turnover in the catalytic domain of F(1) is coupled via a rotary mechanism of the central stalk subunits to proton translocation. Part of the complex F(1) domain and of the central stalk which is part of the complex rotary element. Rotation of the central stalk against the surrounding alpha(3)beta(3) subunits leads to hydrolysis of ATP in three separate catalytic sites on the beta subunits. The polypeptide is ATP synthase subunit delta, mitochondrial (ATP16) (Kluyveromyces lactis (strain ATCC 8585 / CBS 2359 / DSM 70799 / NBRC 1267 / NRRL Y-1140 / WM37) (Yeast)).